The chain runs to 206 residues: Protein GrpE (206 aa).

Basic and acidic residues predominate over residues 1–14; that stretch reads MDKKNEQQEVREEN. Residues 1–56 are disordered; the sequence is MDKKNEQQEVREENDTSINQESETQVELEEEVVNEECETSSEKTDEKEVDDENVTD. Acidic residues predominate over residues 24–39; that stretch reads TQVELEEEVVNEECET.

This sequence belongs to the GrpE family. Homodimer.

It localises to the cytoplasm. In terms of biological role, participates actively in the response to hyperosmotic and heat shock by preventing the aggregation of stress-denatured proteins, in association with DnaK and GrpE. It is the nucleotide exchange factor for DnaK and may function as a thermosensor. Unfolded proteins bind initially to DnaJ; upon interaction with the DnaJ-bound protein, DnaK hydrolyzes its bound ATP, resulting in the formation of a stable complex. GrpE releases ADP from DnaK; ATP binding to DnaK triggers the release of the substrate protein, thus completing the reaction cycle. Several rounds of ATP-dependent interactions between DnaJ, DnaK and GrpE are required for fully efficient folding. The sequence is that of Protein GrpE from Clostridioides difficile (strain 630) (Peptoclostridium difficile).